The chain runs to 149 residues: MAGRNAINKPKIKMLAQSHARSLSRKRAARSSVQTRSSTSRYASKSLTAPRPTDSKSLALYTGETPLSQSVMTTNTLSKKRAKKIARNQKYLSQKQEDELMMDMDKQMKEKSRLDKVKKALWDLIENFEKNGPTVLPTGEGTTLGVQSF.

The segment at 1-58 (MAGRNAINKPKIKMLAQSHARSLSRKRAARSSVQTRSSTSRYASKSLTAPRPTDSKSL) is disordered. Residues 30–41 (RSSVQTRSSTSR) are compositionally biased toward low complexity.

It belongs to the ALB1 family. In terms of assembly, component of the nucleoplasmic and cytoplasmic pre-60S ribosomal particles.

It is found in the cytoplasm. The protein resides in the nucleus. In terms of biological role, involved in proper assembly of pre-ribosomal particles during the biogenesis of the 60S ribosomal subunit. Accompanies the pre-60S particles to the cytoplasm. The sequence is that of Ribosome biogenesis protein ALB1 (ALB1) from Lodderomyces elongisporus (strain ATCC 11503 / CBS 2605 / JCM 1781 / NBRC 1676 / NRRL YB-4239) (Yeast).